The sequence spans 139 residues: Ribonuclease VapC36 (139 aa).

The 127-residue stretch at 1 to 127 folds into the PINc domain; it reads MIVDTSAVVA…GNDFPQTDLE (127 aa). Mg(2+) contacts are provided by Asp-4 and Asp-100.

The protein belongs to the PINc/VapC protein family. Mg(2+) serves as cofactor.

Functionally, toxic component of a type II toxin-antitoxin (TA) system. An RNase. Its cognate antitoxin is VapB36. The sequence is that of Ribonuclease VapC36 from Mycobacterium tuberculosis (strain ATCC 25618 / H37Rv).